The sequence spans 353 residues: D-alanine--D-alanine ligase A (353 aa).

One can recognise an ATP-grasp domain in the interval 141-346 (KRLVNEAGLS…YPEIINRLVA (206 aa)). Residue 169 to 224 (EQALGLPIFIKPARQGSSVGVHKVVTEADYQAAMSDGFIYDDKLLAEEFIQAREVE) participates in ATP binding. 3 residues coordinate Mg(2+): D300, E313, and N315.

It belongs to the D-alanine--D-alanine ligase family. Mg(2+) is required as a cofactor. The cofactor is Mn(2+).

It is found in the cytoplasm. The catalysed reaction is 2 D-alanine + ATP = D-alanyl-D-alanine + ADP + phosphate + H(+). Its pathway is cell wall biogenesis; peptidoglycan biosynthesis. Its function is as follows. Cell wall formation. The chain is D-alanine--D-alanine ligase A from Brucella melitensis biotype 1 (strain ATCC 23456 / CCUG 17765 / NCTC 10094 / 16M).